A 296-amino-acid polypeptide reads, in one-letter code: Glycine--tRNA ligase alpha subunit (296 aa).

Belongs to the class-II aminoacyl-tRNA synthetase family. Tetramer of two alpha and two beta subunits.

It is found in the cytoplasm. The enzyme catalyses tRNA(Gly) + glycine + ATP = glycyl-tRNA(Gly) + AMP + diphosphate. The polypeptide is Glycine--tRNA ligase alpha subunit (Listeria monocytogenes serotype 4b (strain CLIP80459)).